Here is a 472-residue protein sequence, read N- to C-terminus: MLRVGPLTIGTLDDWAPSTGSTVSWRPSAVAHTKASQAPISDVPVSYMQAQHIRGYCEQKAKGLDYSRLMVVSCQQPGQCDIRAANYVINAHLRRHDTYRSWFQYNGNGQIIRRTIQDPADIEFVPVHHGELTLPQIREIVQNTPDPLQWGCFRFGIVQGCDHFTFFASVDHVHVDAMIVGVTLMEFHLMYAALVGGHAPLELPPAGSYDDFCRRQHTFSSTLTVESPQVRAWTKFAEGTNGSFPDFPLPLGDPSKPSDADIVTVMMLDEEQTAQFESVCTAAGARFIGGVLACCGLAEHELTGTTTYYGLTPRDTRRTPADAMTQGWFTGLIPITVPIAGSAFGDAARAAQTSFDSGVKLAEVPYDRVVELSSTLTMPRPNFPVVNFLDAGAAPLSVLLTAELTGTNIGVYSDGRYSYQLSIYVIRVEQGTAVAVMFPDNPIARESVARYLATLKSVFQRVAESGQQQNVA.

The protein belongs to the PapA acyltransferase family.

The enzyme catalyses a long-chain fatty acyl-CoA + alpha,alpha-trehalose = a 2-O-(long-chain fatty acyl)-alpha,alpha-trehalose + CoA. It carries out the reaction a mycolipenoyl-CoA + a 2-O-(long-chain fatty acyl)-alpha,alpha-trehalose = a 2-O-(long-chain fatty acyl)-3-O-mycolipenoyl-trehalose + CoA. It catalyses the reaction alpha,alpha-trehalose + hexadecanoyl-CoA = 2-O-hexadecanoyl-alpha,alpha-trehalose + CoA. The catalysed reaction is 2-O-hexadecanoyl-alpha,alpha-trehalose + hexadecanoyl-CoA = 2-O,3-O-dihexadecanoyl-alpha,alpha-trehalose + CoA. In terms of biological role, involved in the biosynthesis of polyacyltrehalose (PAT), a pentaacylated, trehalose-based glycolipid that could have a role in anchoring the bacterial capsule. Catalyzes the sequential transfer of two palmitoyl groups onto a single glucose residue of trehalose generating the diacylated product 2,3-diacyltrehalose (trehalose dipalmitate). The protein is Acyltransferase PapA3 (papA3) of Mycobacterium tuberculosis (strain CDC 1551 / Oshkosh).